The chain runs to 1021 residues: MISLYQILAEKKKKKKNDLNIFAFSVFAIICFKFYSVNAIKLPQQEVDALQQIATTLGSKFWKFDAENCKIEMVGLTETPPPTAKQEIECECSPTNDTDCHVVKFAFKDHNLPGTLPQIVKLPYLREIDLAYNYINGTLPREWASSNLTFISLLVNRLSGEIPKEFGNSSLTYLDLESNAFSGTIPQELGNLVHLKKLLLSSNKLTGTLPASLARLQNMTDFRINDLQLSGTIPSYIQNWKQLERLEMIASGLTGPIPSVISVLSNLVNLRISDIRGPVQPFPSLKNVTGLTKIILKNCNISGQIPTYLSHLKELETLDLSFNKLVGGIPSFAQAENLRFIILAGNMLEGDAPDELLRDGITVDLSYNNLKWQSPESRACRPNMNLNLNLFQSTSTKKSSKFLPCIKDFKCPRYSSCLHVNCGGSDMYVKEKKTKELYEGDGNVEGGAAKYFLKPDANWGFSSTGDFMDDNNFQNTRFTMFVPASNQSDLYKSARIAPVSLTYFHACLENGNYTINLDFAEIRFTNDENYNRLGRRLFDIYIQEKLVAKDFNIMDEAKGAQTPIIKPLTAYVTNHFLTIRLSWAGKGTTRIPTRGVYGPIISAISIVSDSKPCERPKTGMSPGAYIAIGIGAPCLIIFILGFLWICGCLPRCGRQRKDPYEEELPSGTFTLRQIKFATDDFNPTNKIGEGGFGAVFKGVLADGRVVAVKQLSSKSRQGNREFLNEIGAISCLQHPNLVKLHGFCVERAQLLLAYEYMENNSLSSALFSPKHKQIPMDWPTRFKICCGIAKGLAFLHEESPLKFVHRDIKATNILLDKDLTPKISDFGLARLDEEEKTHISTKVAGTIGYMAPEYALWGYLTFKADVYSFGVLVLEIVAGITNSNFMGAGDSVCLLEFANECVESGHLMQVVDERLRPEVDRKEAEAVIKVALVCSSASPTDRPLMSEVVAMLEGLYPVPESTPGVSRNAGDIRFKAFKDLRRGMENNSKTQCSVKSYPSSSSTSSGAGQAVQERKKEESRP.

Positions 1-39 (MISLYQILAEKKKKKKNDLNIFAFSVFAIICFKFYSVNA) are cleaved as a signal peptide. At 41–625 (KLPQQEVDAL…PKTGMSPGAY (585 aa)) the chain is on the extracellular side. Asn96 carries N-linked (GlcNAc...) asparagine glycosylation. LRR repeat units follow at residues 99-122 (DCHVVKFAFKDHNLPGTLPQIVKL) and 123-146 (PYLREIDLAYNYINGTLPREWASS). Residues Asn136, Asn147, and Asn168 are each glycosylated (N-linked (GlcNAc...) asparagine). LRR repeat units lie at residues 148-168 (LTFISLLVNRLSGEIPKEFGN), 169-192 (SSLTYLDLESNAFSGTIPQELGNL), 193-216 (VHLKKLLLSSNKLTGTLPASLARL), 218-240 (NMTDFRINDLQLSGTIPSYIQNW), and 241-266 (KQLERLEMIASGLTGPIPSVISVLSN). The N-linked (GlcNAc...) asparagine glycan is linked to Asn218. 2 N-linked (GlcNAc...) asparagine glycosylation sites follow: Asn287 and Asn300. LRR repeat units follow at residues 288–312 (VTGLTKIILKNCNISGQIPTYLSHL), 313–336 (KELETLDLSFNKLVGGIPSFAQAE), 338–359 (LRFIILAGNMLEGDAPDELLRD), and 361–381 (ITVDLSYNNLKWQSPESRACR). N-linked (GlcNAc...) asparagine glycans are attached at residues Asn486 and Asn512. The chain crosses the membrane as a helical span at residues 626–646 (IAIGIGAPCLIIFILGFLWIC). Residues 647–1021 (GCLPRCGRQR…QERKKEESRP (375 aa)) lie on the Cytoplasmic side of the membrane. Position 670 is a phosphothreonine (Thr670). Residues 681 to 956 (FNPTNKIGEG…EVVAMLEGLY (276 aa)) form the Protein kinase domain. ATP-binding positions include 687-695 (IGEGGFGAV) and Lys709. Position 754 is a phosphotyrosine (Tyr754). Asp807 acts as the Proton acceptor in catalysis. Ser840 bears the Phosphoserine mark. Phosphothreonine occurs at positions 841 and 846. A Phosphotyrosine modification is found at Tyr854. The tract at residues 985 to 1021 (ENNSKTQCSVKSYPSSSSTSSGAGQAVQERKKEESRP) is disordered. Residues 993-1005 (SVKSYPSSSSTSS) show a composition bias toward low complexity. A compositionally biased stretch (basic and acidic residues) spans 1012–1021 (QERKKEESRP).

The protein belongs to the protein kinase superfamily. Ser/Thr protein kinase family. As to expression, mostly expressed in flower buds, especially in stamens.

The protein localises to the membrane. It catalyses the reaction L-seryl-[protein] + ATP = O-phospho-L-seryl-[protein] + ADP + H(+). The enzyme catalyses L-threonyl-[protein] + ATP = O-phospho-L-threonyl-[protein] + ADP + H(+). This Arabidopsis thaliana (Mouse-ear cress) protein is Probable LRR receptor-like serine/threonine-protein kinase RFK1 (RKF1).